A 294-amino-acid chain; its full sequence is N-acetylmuramic acid 6-phosphate etherase (294 aa).

Residues valine 54–lysine 217 enclose the SIS domain. The Proton donor role is filled by glutamate 82. Residue glutamate 113 is part of the active site.

It belongs to the GCKR-like family. MurNAc-6-P etherase subfamily. As to quaternary structure, homodimer.

The enzyme catalyses N-acetyl-D-muramate 6-phosphate + H2O = N-acetyl-D-glucosamine 6-phosphate + (R)-lactate. It functions in the pathway amino-sugar metabolism; N-acetylmuramate degradation. Its function is as follows. Specifically catalyzes the cleavage of the D-lactyl ether substituent of MurNAc 6-phosphate, producing GlcNAc 6-phosphate and D-lactate. The sequence is that of N-acetylmuramic acid 6-phosphate etherase from Bacillus cereus (strain G9842).